We begin with the raw amino-acid sequence, 144 residues long: Large ribosomal subunit protein uL13 (144 aa).

This sequence belongs to the universal ribosomal protein uL13 family. As to quaternary structure, part of the 50S ribosomal subunit.

Its function is as follows. This protein is one of the early assembly proteins of the 50S ribosomal subunit, although it is not seen to bind rRNA by itself. It is important during the early stages of 50S assembly. In Clostridium perfringens (strain ATCC 13124 / DSM 756 / JCM 1290 / NCIMB 6125 / NCTC 8237 / Type A), this protein is Large ribosomal subunit protein uL13.